We begin with the raw amino-acid sequence, 550 residues long: Glucose-6-phosphate isomerase 1 (550 aa).

E355 (proton donor) is an active-site residue. Residues H386 and K512 contribute to the active site.

Belongs to the GPI family.

The protein localises to the cytoplasm. It catalyses the reaction alpha-D-glucose 6-phosphate = beta-D-fructose 6-phosphate. It participates in carbohydrate biosynthesis; gluconeogenesis. It functions in the pathway carbohydrate degradation; glycolysis; D-glyceraldehyde 3-phosphate and glycerone phosphate from D-glucose: step 2/4. Catalyzes the reversible isomerization of glucose-6-phosphate to fructose-6-phosphate. In Rhodococcus jostii (strain RHA1), this protein is Glucose-6-phosphate isomerase 1.